The following is a 192-amino-acid chain: Orotate phosphoribosyltransferase (192 aa).

116 to 124 (EDIVTTGLS) lines the 5-phospho-alpha-D-ribose 1-diphosphate pocket. The orotate site is built by Thr-120 and Arg-148.

The protein belongs to the purine/pyrimidine phosphoribosyltransferase family. PyrE subfamily. In terms of assembly, homodimer. The cofactor is Mg(2+).

The catalysed reaction is orotidine 5'-phosphate + diphosphate = orotate + 5-phospho-alpha-D-ribose 1-diphosphate. The protein operates within pyrimidine metabolism; UMP biosynthesis via de novo pathway; UMP from orotate: step 1/2. Functionally, catalyzes the transfer of a ribosyl phosphate group from 5-phosphoribose 1-diphosphate to orotate, leading to the formation of orotidine monophosphate (OMP). The chain is Orotate phosphoribosyltransferase from Brucella anthropi (strain ATCC 49188 / DSM 6882 / CCUG 24695 / JCM 21032 / LMG 3331 / NBRC 15819 / NCTC 12168 / Alc 37) (Ochrobactrum anthropi).